Consider the following 334-residue polypeptide: 6-phosphogluconolactonase (334 aa).

Belongs to the cycloisomerase 2 family.

The catalysed reaction is 6-phospho-D-glucono-1,5-lactone + H2O = 6-phospho-D-gluconate + H(+). The protein operates within carbohydrate degradation; pentose phosphate pathway; D-ribulose 5-phosphate from D-glucose 6-phosphate (oxidative stage): step 2/3. In terms of biological role, catalyzes the hydrolysis of 6-phosphogluconolactone to 6-phosphogluconate. The sequence is that of 6-phosphogluconolactonase from Yersinia pseudotuberculosis serotype O:1b (strain IP 31758).